Here is a 31-residue protein sequence, read N- to C-terminus: Cycloviolacin-O23 (31 aa).

Positions 1-31 (GLPTCGETCFGGTCNTPGCTCDSSWPICTHN) form a cross-link, cyclopeptide (Gly-Asn). Intrachain disulfides connect C5-C19, C9-C21, and C14-C28.

This is a cyclic peptide. Expressed in leaves but not in petals, petioles, roots and runners (at protein level).

In terms of biological role, probably participates in a plant defense mechanism. The chain is Cycloviolacin-O23 from Viola odorata (Sweet violet).